Here is a 539-residue protein sequence, read N- to C-terminus: Lysophospholipid acyltransferase LPEAT2 (539 aa).

A helical transmembrane segment spans residues 93 to 113 (LVICLPIALIRLVLFAASLAV). Positions 178–183 (HVSYIE) match the HXXXXD motif motif. 3 consecutive EF-hand domains span residues 426 to 455 (KRIFEFIDVEKVGSITFKQFLFASGHVLTQ), 457 to 492 (LFKQTCELAFSHCDADGDGYITIQELGEALKNTIPN), and 493 to 528 (LNKDEIRGMYHLLDDDQDQRISQNDLLSCLRRNPLL). Ca(2+) is bound by residues Asp-470, Asp-472, Asp-474, Tyr-476, Glu-481, Asp-506, Asp-508, Asp-510, Arg-512, and Asp-517.

It belongs to the 1-acyl-sn-glycerol-3-phosphate acyltransferase family.

Its subcellular location is the golgi apparatus membrane. The protein localises to the late endosome membrane. The catalysed reaction is a 1-acyl-sn-glycero-3-phosphoethanolamine + an acyl-CoA = a 1,2-diacyl-sn-glycero-3-phosphoethanolamine + CoA. It carries out the reaction a 1-acyl-sn-glycero-3-phosphocholine + an acyl-CoA = a 1,2-diacyl-sn-glycero-3-phosphocholine + CoA. It catalyses the reaction a 1-acyl-sn-glycero-3-phospho-L-serine + an acyl-CoA = a 1,2-diacyl-sn-glycero-3-phospho-L-serine + CoA. The protein operates within lipid metabolism; phospholipid metabolism. Functionally, possesses acyl-CoA-dependent lysophospholipid acyltransferase activity with a subset of lysophospholipids as substrates. Exhibits strong acylation activity on lysophosphatidylethanolamine (LPE), and lower activity on lysophosphatidylcholine (LPC) and lysophosphatidylserine (LPS). Exhibits acylation activity on both LPE and LPC. Has a preference for 18:1-LPE over 16:0-LPE as acceptor. Palmitoyl-CoA (16:0-CoA) is a better acyl donor than oleoyl-CoA (18:1-CoA). Among several different acyl-CoA species the best acyl donor is eicosanoyl-CoA (20:0-CoA). Activity is calcium-independent. Its activity is essential for maintaining adequate levels of phosphatidylethanolamine (PE), LPE and LPC in the cells, which is crucial for plant growth regulation. The sequence is that of Lysophospholipid acyltransferase LPEAT2 from Arabidopsis thaliana (Mouse-ear cress).